The chain runs to 939 residues: Valine--tRNA ligase (939 aa).

Residues 47-57 carry the 'HIGH' region motif; it reads PNVTGILHMGH. The short motif at 563–567 is the 'KMSKS' region element; it reads KLSKS. Lys566 contributes to the ATP binding site. Residues 873 to 939 are a coiled coil; it reads AEHLAKEHAR…QSILDKIASL (67 aa).

The protein belongs to the class-I aminoacyl-tRNA synthetase family. ValS type 1 subfamily. In terms of assembly, monomer.

It is found in the cytoplasm. It carries out the reaction tRNA(Val) + L-valine + ATP = L-valyl-tRNA(Val) + AMP + diphosphate. In terms of biological role, catalyzes the attachment of valine to tRNA(Val). As ValRS can inadvertently accommodate and process structurally similar amino acids such as threonine, to avoid such errors, it has a 'posttransfer' editing activity that hydrolyzes mischarged Thr-tRNA(Val) in a tRNA-dependent manner. This chain is Valine--tRNA ligase, found in Chlamydia muridarum (strain MoPn / Nigg).